A 110-amino-acid chain; its full sequence is Nucleoid-associated protein YE3092 (110 aa).

It belongs to the YbaB/EbfC family. Homodimer.

The protein resides in the cytoplasm. It is found in the nucleoid. In terms of biological role, binds to DNA and alters its conformation. May be involved in regulation of gene expression, nucleoid organization and DNA protection. In Yersinia enterocolitica serotype O:8 / biotype 1B (strain NCTC 13174 / 8081), this protein is Nucleoid-associated protein YE3092.